Consider the following 367-residue polypeptide: tRNA-specific 2-thiouridylase MnmA (367 aa).

ATP contacts are provided by residues G13 to S20 and M39. Residues N99 to D101 form an interaction with target base in tRNA region. C104 serves as the catalytic Nucleophile. C104 and C200 are oxidised to a cystine. An ATP-binding site is contributed by G128. Residues K150–Q152 form an interaction with tRNA region. C200 serves as the catalytic Cysteine persulfide intermediate. Residues R307–Y308 form an interaction with tRNA region.

The protein belongs to the MnmA/TRMU family.

Its subcellular location is the cytoplasm. The enzyme catalyses S-sulfanyl-L-cysteinyl-[protein] + uridine(34) in tRNA + AH2 + ATP = 2-thiouridine(34) in tRNA + L-cysteinyl-[protein] + A + AMP + diphosphate + H(+). Catalyzes the 2-thiolation of uridine at the wobble position (U34) of tRNA, leading to the formation of s(2)U34. The chain is tRNA-specific 2-thiouridylase MnmA from Neisseria meningitidis serogroup A / serotype 4A (strain DSM 15465 / Z2491).